The sequence spans 55 residues: Large ribosomal subunit protein bL33 (55 aa).

The protein belongs to the bacterial ribosomal protein bL33 family.

In Novosphingobium aromaticivorans (strain ATCC 700278 / DSM 12444 / CCUG 56034 / CIP 105152 / NBRC 16084 / F199), this protein is Large ribosomal subunit protein bL33.